The following is an 88-amino-acid chain: MSSFDKTMKFNFSDDSMETNVNEVLITVHDALQEKGYNPINQIVGYLLSGDPAYIPRHRDARNLIRKIERDEIIEELVKSYLEQHKEA.

This sequence belongs to the UPF0297 family.

In Bacillus licheniformis (strain ATCC 14580 / DSM 13 / JCM 2505 / CCUG 7422 / NBRC 12200 / NCIMB 9375 / NCTC 10341 / NRRL NRS-1264 / Gibson 46), this protein is UPF0297 protein BLi02868/BL02032.